A 116-amino-acid polypeptide reads, in one-letter code: Probable early E4 11 kDa protein (116 aa).

The protein is Probable early E4 11 kDa protein of Human adenovirus A serotype 12 (HAdV-12).